We begin with the raw amino-acid sequence, 285 residues long: MGTPGEGLGRCSHALIRGVPESLASGEGAAAGLPALDLAKAQREHGVLGGKLRQRLGLQLVELPPEESLPLGPLLGDTAVIQGDTALITRPWSPARRPEVDGVRKALQDLGLRIVEMGDENATLDGTDVLFTGREFFVGLSKWTNHRGAEIVADTFRDFAVSTVPVTSTSHLRGLCGMGGPRTVVAGSSEAAQKAVRAMAVLTDHPYASLTLPDDAAADCLFLRPGQPGLPPFLLHRGGGDLPNSQEALQKLSDVTLVPVSCSELEKAGAGLSSLCLVLSTRPHN.

The active-site Proton donor is H171. C276 serves as the catalytic Nucleophile.

Belongs to the DDAH family. In terms of processing, phosphorylated by TBK1. Phosphorylation inhibits the translocation into the mitochondrion upon Sendai viral infection.

It is found in the cytoplasm. The protein localises to the mitochondrion. In terms of biological role, putative hydrolase with unknown substrate. Does not hydrolyze N(G),N(G)-dimethyl-L-arginine (ADMA) which acts as an inhibitor of NOS. In endothelial cells, induces expression of vascular endothelial growth factor (VEGF) via phosphorylation of the transcription factor SP1 by PKA in a process that is independent of NO and NO synthase. Similarly, enhances pancreatic insulin secretion through SP1-mediated transcriptional up-regulation of secretagogin/SCGN, an insulin vesicle docking protein. Upon viral infection, relocates to mitochondria where it promotes mitochondrial fission through activation of DNM1L leading to the inhibition of innate response activation mediated by MAVS. This chain is Putative hydrolase DDAH2 (DDAH2), found in Bos taurus (Bovine).